A 981-amino-acid polypeptide reads, in one-letter code: Anoctamin-3 (981 aa).

The span at 1 to 28 (MVHHSGSIQSFKQQKGMNISKSEITTEA) shows a compositional bias: polar residues. Disordered stretches follow at residues 1-32 (MVHHSGSIQSFKQQKGMNISKSEITTEASLKP) and 67-87 (PTSVTFLSADKPEHVTSEESR). Residues 1-403 (MVHHSGSIQS…LYFAWLGWYT (403 aa)) are Cytoplasmic-facing. Residues 76-87 (DKPEHVTSEESR) are compositionally biased toward basic and acidic residues. The chain crosses the membrane as a helical span at residues 404 to 424 (GMLIPAAVVGLCVFFYGLVTM). Asn-425, Asn-448, and Asn-455 each carry an N-linked (GlcNAc...) asparagine glycan. Topologically, residues 425–469 (NESQVSQEICKATEVFMCPLCDKNCSLQRLNDSCIYAKVTYLFDN) are extracellular. The helical transmembrane segment at 470–490 (GGTVFFAIFMAIWATVFLEFW) threads the bilayer. Residues 491-550 (KRRRSILTYTWDLIEWEEEEETLRPQFEAKYYRMEVINPITGKPEPHQPSSDKVTRLLVS) are Cytoplasmic-facing. A helical membrane pass occupies residues 551–571 (VSGIFFMISLVITAVFAVVVY). Over 572–592 (RLVVMEQFASFKWNFVKQHWQ) the chain is Extracellular. The helical transmembrane segment at 593–613 (FATSGAAVCINFIIIMLLNLA) threads the bilayer. Topologically, residues 614 to 640 (YEKIAYLLTNLEYPRTESEWENSFALK) are cytoplasmic. Residues 641-661 (MFLFQFVNLNSSIFYIAFFLG) traverse the membrane as a helical segment. The Extracellular segment spans residues 662 to 761 (RFVGHPGKYN…MDEYLEMVLQ (100 aa)). Residues 762–782 (FGFTTIFVAAFPLAPLLALLN) form a helical membrane-spanning segment. At 783–810 (NIIEIRLDAYKFVTQWRRPLPARATDIG) the chain is on the cytoplasmic side. Residues 811 to 831 (IWLGILEGIGILAVITNAFVI) traverse the membrane as a helical segment. Over 832-914 (AITSDYIPRF…QYWHILAARL (83 aa)) the chain is Extracellular. Asn-866 carries N-linked (GlcNAc...) asparagine glycosylation. The chain crosses the membrane as a helical span at residues 915 to 935 (AFIIVFEHLVFGIKSFIAYLI). Residues 936–981 (PDIPKGLRERIRREKYLVQEMMYEAELEHLQQQRRKSGQPIHHEWP) are Cytoplasmic-facing.

It belongs to the anoctamin family. In terms of assembly, interacts with KCNT1/Slack. As to expression, predominantly expressed in neuronal tissues. Expressed in brain.

It is found in the cell membrane. It catalyses the reaction a 1,2-diacyl-sn-glycero-3-phosphocholine(in) = a 1,2-diacyl-sn-glycero-3-phosphocholine(out). It carries out the reaction a beta-D-galactosyl-(1&lt;-&gt;1')-N-acylsphing-4-enine(out) = a beta-D-galactosyl-(1&lt;-&gt;1')-N-acylsphing-4-enine(in). Has calcium-dependent phospholipid scramblase activity; scrambles phosphatidylcholine and galactosylceramide. Does not exhibit calcium-activated chloride channel (CaCC) activity. Seems to act as potassium channel regulator and may inhibit pain signaling; can facilitate KCNT1/Slack channel activity by promoting its full single-channel conductance at very low sodium concentrations and by increasing its sodium sensitivity. The sequence is that of Anoctamin-3 from Mus musculus (Mouse).